A 244-amino-acid chain; its full sequence is High affinity immunoglobulin epsilon receptor subunit beta (244 aa).

Over 1–59 (MDTESNRRANLALPQEPSSVPAFEVLEISPQEVSSGRLLKSASSPPLHTWLTVLKKEQE) the chain is Cytoplasmic. Residues 60–79 (FLGVTQILTAMICLCFGTVV) form a helical membrane-spanning segment. The Extracellular segment spans residues 80 to 97 (CSVLDISHIEGDIFSSFK). Residues 98 to 117 (AGYPFWGAIFFSISGMLSII) traverse the membrane as a helical segment. At 118 to 130 (SERRNATYLVRGS) the chain is on the cytoplasmic side. The chain crosses the membrane as a helical span at residues 131-150 (LGANTASSIAGGTGITILII). The Extracellular segment spans residues 151–180 (NLKKSLAYIHIHSCQKFFETKCFMASFSTE). The helical transmembrane segment at 181–200 (IVVMMLFLTILGLGSAVSLT) threads the bilayer. Residues 201-244 (ICGAGEELKGNKVPEDRVYEELNIYSATYSELEDPGEMSPPIDL) lie on the Cytoplasmic side of the membrane. Tyrosine 219 and tyrosine 225 each carry phosphotyrosine. A Phosphoserine modification is found at serine 226. The residue at position 229 (tyrosine 229) is a Phosphotyrosine.

It belongs to the MS4A family. As to quaternary structure, tetramer of an alpha chain, a beta chain, and two disulfide linked gamma chains. Binds LILRB1. Interacts with FGR, FES/FPS and LYN. In terms of processing, phosphorylated on tyrosine residues by LYN. As to expression, found on the surface of mast cells and basophils.

The protein localises to the membrane. In terms of biological role, high affinity receptor that binds to the Fc region of immunoglobulins epsilon. Aggregation of FCER1 by multivalent antigens is required for the full mast cell response, including the release of preformed mediators (such as histamine) by degranulation and de novo production of lipid mediators and cytokines. Also mediates the secretion of important lymphokines. Binding of allergen to receptor-bound IgE leads to cell activation and the release of mediators responsible for the manifestations of allergy. In Homo sapiens (Human), this protein is High affinity immunoglobulin epsilon receptor subunit beta (MS4A2).